The following is a 217-amino-acid chain: Small ribosomal subunit protein uS3 (217 aa).

Residues 40–110 (IRDLINKWFN…EVYINIHEVR (71 aa)) enclose the KH type-2 domain.

The protein belongs to the universal ribosomal protein uS3 family. As to quaternary structure, part of the 30S ribosomal subunit. Forms a tight complex with proteins S10 and S14.

Functionally, binds the lower part of the 30S subunit head. Binds mRNA in the 70S ribosome, positioning it for translation. The sequence is that of Small ribosomal subunit protein uS3 from Rickettsia typhi (strain ATCC VR-144 / Wilmington).